The chain runs to 1317 residues: Nucleoporin NUP145 (1317 aa).

Residues 1–16 (MFNKSVNSGFTFGNQN) are compositionally biased toward polar residues. Residues 1-36 (MFNKSVNSGFTFGNQNTSTPTSTPAQPSSSLQFPQK) are disordered. An FG 1 repeat occupies 12–13 (FG). A compositionally biased stretch (low complexity) spans 17-30 (TSTPTSTPAQPSSS). A GLFG 1 repeat occupies 39 to 42 (GLFG). An FG 2 repeat occupies 79 to 80 (FG). One copy of the GLFG 2 repeat lies at 89–92 (GLFG). The FG 3 repeat unit spans residues 106-107 (FG). The disordered stretch occupies residues 133–165 (QNGGLFGNSNNNNITSTTQNGGLFGKPTTTPAG). GLFG repeat units lie at residues 136–139 (GLFG), 154–157 (GLFG), 168–171 (GLFG), and 181–184 (GLFG). Positions 139 to 164 (GNSNNNNITSTTQNGGLFGKPTTTPA) are enriched in low complexity. The stretch at 193–196 (GIFG) is one GLFG 7; approximate repeat. The stretch at 206–209 (GLFG) is one GLFG 8 repeat. Positions 249–278 (TSSLSDVNGKSDAEPKPIENRRTYSFSSSV) are disordered. Basic and acidic residues predominate over residues 257–270 (GKSDAEPKPIENRR). S273 is modified (phosphoserine). Positions 369 to 385 (RKLKIDSNRSAAKKLKL) match the Bipartite nuclear localization signal motif. The interval 390-450 (PAITKKHMQD…NLNKQDGENT (61 aa)) is disordered. A required for autocatalytic cleavage region spans residues 398 to 523 (QDEQDSSENE…FGKIVIFRSS (126 aa)). A phosphoserine mark is found at S403, S404, and S414. Positions 418–427 (IDRKENRDNN) are enriched in basic and acidic residues. Over residues 428 to 444 (LDNTYLNGKEQSNNLNK) the composition is skewed to polar residues. Residues 458 to 605 (SFGYWCSPSP…GTWTFKVNHF (148 aa)) form the Peptidase S59 domain. The tract at residues 460-604 (GYWCSPSPEQ…GGTWTFKVNH (145 aa)) is nucleoporin RNA-binding motif (NRM). Phosphoserine is present on residues S667, S679, and S689. T751 is modified (phosphothreonine).

This sequence belongs to the nucleoporin GLFG family. As to quaternary structure, component of the nuclear pore complex (NPC). NPC constitutes the exclusive means of nucleocytoplasmic transport. NPCs allow the passive diffusion of ions and small molecules and the active, nuclear transport receptor-mediated bidirectional transport of macromolecules such as proteins, RNAs, ribonucleoparticles (RNPs), and ribosomal subunits across the nuclear envelope. Due to its 8-fold rotational symmetry, all subunits are present with 8 copies or multiples thereof. NUP145C is part of the heptameric 0.5 MDa autoassembling NUP84 NPC subcomplex (NUP84, NUP85, NUP120, NUP133, NUP145C, SEC13 and SEH1). NUP145N may bind homomeric RNA and interacts through its FG repeats with karyopherins. Interacts with MLP1 and MLP2. NUP145 is autocatalytically cleaved in NUP145N and NUP145C.

Its subcellular location is the nucleus. The protein resides in the nuclear pore complex. It localises to the nucleus membrane. In terms of biological role, functions as a component of the nuclear pore complex (NPC). NPC components, collectively referred to as nucleoporins (NUPs), can play the role of both NPC structural components and of docking or interaction partners for transiently associated nuclear transport factors. Active directional transport is assured by both, a Phe-Gly (FG) repeat affinity gradient for these transport factors across the NPC and a transport cofactor concentration gradient across the nuclear envelope (GSP1 and GSP2 GTPases associated predominantly with GTP in the nucleus, with GDP in the cytoplasm). NUP145 is autocatalytically cleaved in vivo in 2 polypeptides which assume different functions in the NPC. NUP145N as one of the FG repeat nucleoporins participates in karyopherin interactions and contains part of the autocatalytic cleavage activity. NUP145C as part of the NUP84 complex is involved in nuclear poly(A)+ RNA and tRNA export. It is also required for normal NPC distribution (probably through interactions with MLP1 and MLP2) and NPC assembly, as well as for normal nuclear envelope organization. This is Nucleoporin NUP145 (NUP145) from Saccharomyces cerevisiae (strain ATCC 204508 / S288c) (Baker's yeast).